Here is a 237-residue protein sequence, read N- to C-terminus: uncharacterized protein (237 aa).

Residues 3–116 enclose the Response regulatory domain; that stretch reads SALLIDDERF…RLAKTVQRLL (114 aa). Asp54 is subject to 4-aspartylphosphate. The 102-residue stretch at 135-236 folds into the HTH LytTR-type domain; the sequence is IPCTGLNRIV…LKELKEMLGF (102 aa).

This is an uncharacterized protein from Vibrio cholerae serotype O1 (strain ATCC 39315 / El Tor Inaba N16961).